Reading from the N-terminus, the 145-residue chain is Extracellular globin-2 (145 aa).

The Globin domain maps to 3–145 (QCGVLEGLKV…HIEDGIKGHH (143 aa)). Cys4 and Cys133 are joined by a disulfide. His96 is a heme b binding site.

It belongs to the globin family. The extracellular hemoglobin of the earthworm consists of 12 subunits that have a hexagonal bilayer structure with a molecular weight near 3.8 million. Each one-twelfth subunit is composed primarily of disulfide linked trimers (chains A, B, and C) and monomers (chain D).

This chain is Extracellular globin-2, found in Lumbricus terrestris (Common earthworm).